Here is a 126-residue protein sequence, read N- to C-terminus: uncharacterized protein (126 aa).

This is an uncharacterized protein from Xylella fastidiosa (strain 9a5c).